The following is a 330-amino-acid chain: Beta-ketoacyl-[acyl-carrier-protein] synthase III (330 aa).

Catalysis depends on residues C115 and H255. The segment at 256 to 260 (QANFR) is ACP-binding. Residue N285 is part of the active site.

Belongs to the thiolase-like superfamily. FabH family. Homodimer.

It localises to the cytoplasm. The enzyme catalyses malonyl-[ACP] + acetyl-CoA + H(+) = 3-oxobutanoyl-[ACP] + CO2 + CoA. It participates in lipid metabolism; fatty acid biosynthesis. Catalyzes the condensation reaction of fatty acid synthesis by the addition to an acyl acceptor of two carbons from malonyl-ACP. Catalyzes the first condensation reaction which initiates fatty acid synthesis and may therefore play a role in governing the total rate of fatty acid production. Possesses both acetoacetyl-ACP synthase and acetyl transacylase activities. Its substrate specificity determines the biosynthesis of branched-chain and/or straight-chain of fatty acids. The polypeptide is Beta-ketoacyl-[acyl-carrier-protein] synthase III (Helicobacter pylori (strain P12)).